The primary structure comprises 170 residues: Sec-independent protein translocase protein TatB (170 aa).

Residues 1–21 traverse the membrane as a helical segment; the sequence is MIDLGISKLALIGAVALIVIG.

The protein belongs to the TatB family. The Tat system comprises two distinct complexes: a TatABC complex, containing multiple copies of TatA, TatB and TatC subunits, and a separate TatA complex, containing only TatA subunits. Substrates initially bind to the TatABC complex, which probably triggers association of the separate TatA complex to form the active translocon.

It localises to the cell inner membrane. Functionally, part of the twin-arginine translocation (Tat) system that transports large folded proteins containing a characteristic twin-arginine motif in their signal peptide across membranes. Together with TatC, TatB is part of a receptor directly interacting with Tat signal peptides. TatB may form an oligomeric binding site that transiently accommodates folded Tat precursor proteins before their translocation. In Cupriavidus necator (strain ATCC 17699 / DSM 428 / KCTC 22496 / NCIMB 10442 / H16 / Stanier 337) (Ralstonia eutropha), this protein is Sec-independent protein translocase protein TatB.